Here is a 366-residue protein sequence, read N- to C-terminus: Cobalt-precorrin-5B C(1)-methyltransferase (366 aa).

It belongs to the CbiD family.

The enzyme catalyses Co-precorrin-5B + S-adenosyl-L-methionine = Co-precorrin-6A + S-adenosyl-L-homocysteine. Its pathway is cofactor biosynthesis; adenosylcobalamin biosynthesis; cob(II)yrinate a,c-diamide from sirohydrochlorin (anaerobic route): step 6/10. Catalyzes the methylation of C-1 in cobalt-precorrin-5B to form cobalt-precorrin-6A. The chain is Cobalt-precorrin-5B C(1)-methyltransferase from Hahella chejuensis (strain KCTC 2396).